We begin with the raw amino-acid sequence, 826 residues long: Ribonucleases P/MRP protein subunit POP1 (826 aa).

Disordered stretches follow at residues 1-24 (MATT…PRKI) and 49-91 (NKDF…SGGD). Positions 58-65 (KRRRTNSY) match the Nuclear localization signal motif. Residues 70 to 79 (AKKRNIKRQK) are compositionally biased toward basic residues.

As to quaternary structure, component of nuclear RNase P and RNase MRP ribonucleoproteins. RNase P consists of a catalytic RNA moiety and different protein chains. Several subunits of RNase P are also part of the RNase MRP complex. RNase MRP consists of a catalytic RNA moiety and several protein subunits.

The protein resides in the nucleus. It is found in the nucleolus. In terms of biological role, component of ribonuclease P, a ribonucleoprotein complex that generates mature tRNA molecules by cleaving their 5'-ends. Also a component of the MRP ribonuclease complex, which cleaves pre-rRNA sequences. Required for rRNA maturation, including 5.8S rRNA processing. This is Ribonucleases P/MRP protein subunit POP1 from Arabidopsis thaliana (Mouse-ear cress).